The chain runs to 214 residues: Ribonuclease T (214 aa).

One can recognise an Exonuclease domain in the interval 20–195; sequence VVVDVETAGF…YDTQKTAELF (176 aa). Asp-23, Glu-25, His-182, and Asp-187 together coordinate Mg(2+). His-182 functions as the Proton donor/acceptor in the catalytic mechanism.

It belongs to the RNase T family. As to quaternary structure, homodimer. Requires Mg(2+) as cofactor.

Trims short 3' overhangs of a variety of RNA species, leaving a one or two nucleotide 3' overhang. Responsible for the end-turnover of tRNA: specifically removes the terminal AMP residue from uncharged tRNA (tRNA-C-C-A). Also appears to be involved in tRNA biosynthesis. This is Ribonuclease T from Vibrio parahaemolyticus serotype O3:K6 (strain RIMD 2210633).